We begin with the raw amino-acid sequence, 394 residues long: Elongation factor Tu 2 (394 aa).

The region spanning 10 to 204 (KPHVNVGTIG…ALDSYIPEPE (195 aa)) is the tr-type G domain. The interval 19–26 (GHVDHGKT) is G1. GTP is bound at residue 19-26 (GHVDHGKT). Threonine 26 contributes to the Mg(2+) binding site. The segment at 60–64 (GITIN) is G2. Positions 81-84 (DCPG) are G3. GTP-binding positions include 81-85 (DCPGH) and 136-139 (NKCD). The segment at 136–139 (NKCD) is G4. Residues 174–176 (SAL) form a G5 region.

The protein belongs to the TRAFAC class translation factor GTPase superfamily. Classic translation factor GTPase family. EF-Tu/EF-1A subfamily. Monomer.

It localises to the cytoplasm. The catalysed reaction is GTP + H2O = GDP + phosphate + H(+). Its function is as follows. GTP hydrolase that promotes the GTP-dependent binding of aminoacyl-tRNA to the A-site of ribosomes during protein biosynthesis. The chain is Elongation factor Tu 2 from Shewanella sp. (strain MR-4).